The chain runs to 288 residues: Glycine--tRNA ligase alpha subunit (288 aa).

This sequence belongs to the class-II aminoacyl-tRNA synthetase family. Tetramer of two alpha and two beta subunits.

It is found in the cytoplasm. The catalysed reaction is tRNA(Gly) + glycine + ATP = glycyl-tRNA(Gly) + AMP + diphosphate. The chain is Glycine--tRNA ligase alpha subunit from Rickettsia massiliae (strain Mtu5).